The following is a 296-amino-acid chain: mRNA export factor rsm1 (296 aa).

Residues 40 to 174 (PWSREEFLRR…VSTHLPEEMT (135 aa)) form a C3HC-type zinc finger.

The protein localises to the cytoplasm. It is found in the nucleus. Involved in the export of mRNA from the nucleus to the cytoplasm. This is mRNA export factor rsm1 (rsm1) from Schizosaccharomyces pombe (strain 972 / ATCC 24843) (Fission yeast).